A 432-amino-acid chain; its full sequence is 3-phosphoshikimate 1-carboxyvinyltransferase (432 aa).

Residues Lys-22, Ser-23, and Arg-27 each contribute to the 3-phosphoshikimate site. Phosphoenolpyruvate is bound at residue Lys-22. 2 residues coordinate phosphoenolpyruvate: Gly-96 and Arg-127. 3-phosphoshikimate is bound by residues Ser-173, Ser-174, Gln-175, Ser-201, Asp-316, Asn-339, and Lys-343. Phosphoenolpyruvate is bound at residue Gln-175. The active-site Proton acceptor is the Asp-316. Phosphoenolpyruvate is bound by residues Arg-347, Arg-391, and Lys-416.

This sequence belongs to the EPSP synthase family. In terms of assembly, monomer.

Its subcellular location is the cytoplasm. The catalysed reaction is 3-phosphoshikimate + phosphoenolpyruvate = 5-O-(1-carboxyvinyl)-3-phosphoshikimate + phosphate. It functions in the pathway metabolic intermediate biosynthesis; chorismate biosynthesis; chorismate from D-erythrose 4-phosphate and phosphoenolpyruvate: step 6/7. Catalyzes the transfer of the enolpyruvyl moiety of phosphoenolpyruvate (PEP) to the 5-hydroxyl of shikimate-3-phosphate (S3P) to produce enolpyruvyl shikimate-3-phosphate and inorganic phosphate. This chain is 3-phosphoshikimate 1-carboxyvinyltransferase, found in Actinobacillus pleuropneumoniae serotype 7 (strain AP76).